The chain runs to 551 residues: Dihydroxy-acid dehydratase (551 aa).

Asp78 provides a ligand contact to Mg(2+). Residue Cys119 coordinates [2Fe-2S] cluster. Residues Asp120 and Lys121 each contribute to the Mg(2+) site. The residue at position 121 (Lys121) is an N6-carboxylysine. Cys191 lines the [2Fe-2S] cluster pocket. Residue Glu442 coordinates Mg(2+). Ser468 functions as the Proton acceptor in the catalytic mechanism.

Belongs to the IlvD/Edd family. In terms of assembly, homodimer. The cofactor is [2Fe-2S] cluster. Mg(2+) is required as a cofactor.

The enzyme catalyses (2R)-2,3-dihydroxy-3-methylbutanoate = 3-methyl-2-oxobutanoate + H2O. The catalysed reaction is (2R,3R)-2,3-dihydroxy-3-methylpentanoate = (S)-3-methyl-2-oxopentanoate + H2O. The protein operates within amino-acid biosynthesis; L-isoleucine biosynthesis; L-isoleucine from 2-oxobutanoate: step 3/4. It participates in amino-acid biosynthesis; L-valine biosynthesis; L-valine from pyruvate: step 3/4. Functions in the biosynthesis of branched-chain amino acids. Catalyzes the dehydration of (2R,3R)-2,3-dihydroxy-3-methylpentanoate (2,3-dihydroxy-3-methylvalerate) into 2-oxo-3-methylpentanoate (2-oxo-3-methylvalerate) and of (2R)-2,3-dihydroxy-3-methylbutanoate (2,3-dihydroxyisovalerate) into 2-oxo-3-methylbutanoate (2-oxoisovalerate), the penultimate precursor to L-isoleucine and L-valine, respectively. This is Dihydroxy-acid dehydratase from Halothermothrix orenii (strain H 168 / OCM 544 / DSM 9562).